The primary structure comprises 657 residues: Pyoverdine export ATP-binding/permease protein PvdT (657 aa).

An ABC transporter domain is found at 6 to 245 (IDLRNIRKSY…LSANAGALQA (240 aa)). 43 to 50 (GASGSGKS) contributes to the ATP binding site. Transmembrane regions (helical) follow at residues 285 to 305 (ALTLLGIIIGVASVVVMLAVG), 532 to 552 (LSLMLGAIAAISLLVGGIGVM), 590 to 610 (LSVVGGLAGIGVALIIGGILI), and 620 to 640 (LAAVLGAFACALVTGVIFGFM).

This sequence belongs to the ABC transporter superfamily. Macrolide exporter (TC 3.A.1.122) family. Part of the tripartite efflux system PvdRT-OpmQ, which is composed of an inner membrane component with both ATPase and permease domains, PvdT, a periplasmic membrane fusion protein, PvdR, and an outer membrane component, OpmQ.

Its subcellular location is the cell inner membrane. Functionally, part of the tripartite efflux system PvdRT-OpmQ required for the secretion into the extracellular milieu of the siderophore pyoverdine (PVD), which is involved in iron acquisition. This subunit binds PVD and drives its secretion by hydrolyzing ATP. The system is responsible for export of newly synthesized PVD after the final steps of biosynthesis have taken place in the periplasm. It is also responsible for recycling of PVD after internalization of ferri-PVD into the periplasm by the outer-membrane receptor FpvA and release of iron from PVD, thus making PVD available for new cycles of iron uptake. The protein is Pyoverdine export ATP-binding/permease protein PvdT of Pseudomonas fluorescens (strain ATCC BAA-477 / NRRL B-23932 / Pf-5).